A 554-amino-acid polypeptide reads, in one-letter code: Dihydroxy-acid dehydratase (554 aa).

Asp-78 is a Mg(2+) binding site. Residue Cys-119 participates in [2Fe-2S] cluster binding. Residues Asp-120 and Lys-121 each contribute to the Mg(2+) site. Position 121 is an N6-carboxylysine (Lys-121). Cys-191 contributes to the [2Fe-2S] cluster binding site. A Mg(2+)-binding site is contributed by Glu-442. Ser-468 acts as the Proton acceptor in catalysis.

The protein belongs to the IlvD/Edd family. As to quaternary structure, homodimer. It depends on [2Fe-2S] cluster as a cofactor. Mg(2+) is required as a cofactor.

The catalysed reaction is (2R)-2,3-dihydroxy-3-methylbutanoate = 3-methyl-2-oxobutanoate + H2O. The enzyme catalyses (2R,3R)-2,3-dihydroxy-3-methylpentanoate = (S)-3-methyl-2-oxopentanoate + H2O. It functions in the pathway amino-acid biosynthesis; L-isoleucine biosynthesis; L-isoleucine from 2-oxobutanoate: step 3/4. The protein operates within amino-acid biosynthesis; L-valine biosynthesis; L-valine from pyruvate: step 3/4. Functionally, functions in the biosynthesis of branched-chain amino acids. Catalyzes the dehydration of (2R,3R)-2,3-dihydroxy-3-methylpentanoate (2,3-dihydroxy-3-methylvalerate) into 2-oxo-3-methylpentanoate (2-oxo-3-methylvalerate) and of (2R)-2,3-dihydroxy-3-methylbutanoate (2,3-dihydroxyisovalerate) into 2-oxo-3-methylbutanoate (2-oxoisovalerate), the penultimate precursor to L-isoleucine and L-valine, respectively. The sequence is that of Dihydroxy-acid dehydratase from Thermotoga sp. (strain RQ2).